A 496-amino-acid chain; its full sequence is MGSMMAFAFSEIGLDVSIWDVKYDNVQQLLESAKNTNYKGKIEGFKDVSKFTQSLEGKAERKIFLFSITHGDPADSVLDMIKKDLKKGDIILDGGNENYRRTEARQKICEKIGVSWIGLGVSGGYQSARRGPSLSPGGDKEALDLVMPLLELYAGKDAKSGQPCVTRIGPKGSGHFVKMVHNGIEGGMLSTLAEAWSLLHYGRGMGYEEIADLFESWNKEGVLRNNYLLEIGAELLRVKKTPQGDGNGEGVGDGGFVLDDVLDKVVQDDDNTEGTPYWSVMESASRHISAPTLATAHFMRIASGNRIERLEVAKQLRIPSPSPIRGMKDIEAFKEHLHSAVYSSFLASFCQGLELIARASEDEGWDIDLGKCLQIWRSGCIIRSEGIADILQPAVSGNKGIKNMKYIDTVAQELHRTYPSLKEIVMAATDSDHYIPAISATLEYLKYEGGTNLPTKFMEAQMDFFGAHGYNLPGVPGEDPGPVSKGPHHYEWRPAK.

NADP(+)-binding positions include 13–18 (GLDVSI), 24–26 (DNV), 68–70 (ITH), and N96. Substrate is bound by residues N96 and 122 to 124 (SGG). Residue K178 is the Proton acceptor of the active site. 181-182 (HN) contacts substrate. The active-site Proton donor is E185. 2 residues coordinate substrate: R300 and H468. A disordered region spans residues 476-496 (PGEDPGPVSKGPHHYEWRPAK).

The protein belongs to the 6-phosphogluconate dehydrogenase family. Homodimer.

The protein localises to the cytoplasm. It carries out the reaction 6-phospho-D-gluconate + NADP(+) = D-ribulose 5-phosphate + CO2 + NADPH. It functions in the pathway carbohydrate degradation; pentose phosphate pathway; D-ribulose 5-phosphate from D-glucose 6-phosphate (oxidative stage): step 3/3. Its function is as follows. Catalyzes the oxidative decarboxylation of 6-phosphogluconate to ribulose 5-phosphate and CO(2), with concomitant reduction of NADP to NADPH. The chain is 6-phosphogluconate dehydrogenase, decarboxylating from Emericella nidulans (strain FGSC A4 / ATCC 38163 / CBS 112.46 / NRRL 194 / M139) (Aspergillus nidulans).